The primary structure comprises 237 residues: Phosphoribosylaminoimidazole-succinocarboxamide synthase (237 aa).

The protein belongs to the SAICAR synthetase family.

It catalyses the reaction 5-amino-1-(5-phospho-D-ribosyl)imidazole-4-carboxylate + L-aspartate + ATP = (2S)-2-[5-amino-1-(5-phospho-beta-D-ribosyl)imidazole-4-carboxamido]succinate + ADP + phosphate + 2 H(+). The protein operates within purine metabolism; IMP biosynthesis via de novo pathway; 5-amino-1-(5-phospho-D-ribosyl)imidazole-4-carboxamide from 5-amino-1-(5-phospho-D-ribosyl)imidazole-4-carboxylate: step 1/2. The chain is Phosphoribosylaminoimidazole-succinocarboxamide synthase from Listeria monocytogenes serotype 4b (strain CLIP80459).